A 130-amino-acid chain; its full sequence is Small ribosomal subunit protein uS9 (130 aa).

The protein belongs to the universal ribosomal protein uS9 family.

The chain is Small ribosomal subunit protein uS9 from Shewanella piezotolerans (strain WP3 / JCM 13877).